A 442-amino-acid polypeptide reads, in one-letter code: Inhibitor of Apoptosis OPG037 (442 aa).

6 ANK repeats span residues 67 to 96, 100 to 131, 203 to 233, 237 to 267, 292 to 321, and 323 to 347; these read DGNY…DPNA, HNKT…KINN, DGNT…DVNK, FGDS…VITD, YDST…ICED, and MYYA…SVDS.

Belongs to the orthopoxvirus OPG037 family. As to quaternary structure, may interact with host caspase-9-Apaf-1 complex.

Its subcellular location is the host cytoplasm. Its function is as follows. Inhibits host apoptosis. Acts by associating with host apoptosome. The protein is Inhibitor of Apoptosis OPG037 (OPG037) of Monkeypox virus.